The primary structure comprises 331 residues: D-lactate dehydrogenase (331 aa).

NAD(+)-binding positions include 155 to 156 (HI), D175, 206 to 207 (VP), N212, 233 to 235 (AAR), and D259. The active site involves R235. Residue E264 is part of the active site. Catalysis depends on H296, which acts as the Proton donor.

Belongs to the D-isomer specific 2-hydroxyacid dehydrogenase family. Homodimer.

It carries out the reaction (R)-lactate + NAD(+) = pyruvate + NADH + H(+). In Leuconostoc mesenteroides subsp. cremoris, this protein is D-lactate dehydrogenase.